The following is a 291-amino-acid chain: Dihydroorotate dehydrogenase A (fumarate) (291 aa).

FMN contacts are provided by residues serine 18 and 42–43 (KS). Substrate-binding positions include lysine 42, 66 to 70 (NAVGL), and asparagine 126. Asparagine 126 is a binding site for FMN. Cysteine 129 (nucleophile) is an active-site residue. FMN-binding residues include lysine 164 and isoleucine 190. 191-192 (NT) lines the substrate pocket. Residues glycine 216, 242–243 (GG), and 264–265 (GS) contribute to the FMN site.

It belongs to the dihydroorotate dehydrogenase family. Type 1 subfamily. Homodimer. Requires FMN as cofactor.

The protein resides in the cytoplasm. It carries out the reaction (S)-dihydroorotate + fumarate = orotate + succinate. It functions in the pathway pyrimidine metabolism; UMP biosynthesis via de novo pathway. In terms of biological role, catalyzes the conversion of dihydroorotate to orotate with fumarate as the electron acceptor. The chain is Dihydroorotate dehydrogenase A (fumarate) (pyrD) from Lacticaseibacillus paracasei (strain ATCC 334 / BCRC 17002 / CCUG 31169 / CIP 107868 / KCTC 3260 / NRRL B-441) (Lactobacillus paracasei).